The following is a 624-amino-acid chain: Poly(A)-specific ribonuclease PARN (624 aa).

Residues D28 and E30 each contribute to the a divalent metal cation site. Residues 171-238 form the R3H domain; that stretch reads KKFIDQVIEK…ERHIVISKVD (68 aa). K213 bears the N6-acetyllysine mark. Residues D285 and D375 each contribute to the a divalent metal cation site. An N6-acetyllysine modification is found at K492. S523 bears the Phosphoserine mark. The residue at position 543 (S543) is a Phosphoserine; by MAPKAPK2. The disordered stretch occupies residues 551–612; sequence GKRTLSPDPR…ELSLAGSVSD (62 aa). The span at 567–579 shows a compositional bias: acidic residues; that stretch reads RESEEVSDSELEQ. S569, S573, and S575 each carry phosphoserine. Over residues 592 to 601 the composition is skewed to basic residues; the sequence is KKSKKLKRMK. A phosphoserine mark is found at S605, S609, and S613.

It belongs to the CAF1 family. Homodimer. Found in a mRNA decay complex with RENT1, RENT2 and RENT3B. Interacts with KHSRP. Interacts with CELF1/CUGBP1. Interacts with ZC3HAV1 in an RNA-independent manner. Interacts with DHX36. Requires Mg(2+) as cofactor. Phosphorylation by MAPKAPK2, preventing GADD45A mRNA degradation after genotoxic stress.

It localises to the nucleus. The protein resides in the cytoplasm. Its subcellular location is the nucleolus. It carries out the reaction Exonucleolytic cleavage of poly(A) to 5'-AMP.. Functionally, 3'-exoribonuclease that has a preference for poly(A) tails of mRNAs, thereby efficiently degrading poly(A) tails. Exonucleolytic degradation of the poly(A) tail is often the first step in the decay of eukaryotic mRNAs and is also used to silence certain maternal mRNAs translationally during oocyte maturation and early embryonic development. Interacts with both the 3'-end poly(A) tail and the 5'-end cap structure during degradation, the interaction with the cap structure being required for an efficient degradation of poly(A) tails. Involved in nonsense-mediated mRNA decay, a critical process of selective degradation of mRNAs that contain premature stop codons. Also involved in degradation of inherently unstable mRNAs that contain AU-rich elements (AREs) in their 3'-UTR, possibly via its interaction with KHSRP. Probably mediates the removal of poly(A) tails of AREs mRNAs, which constitutes the first step of destabilization. Also able to recognize poly(A) tails of microRNAs such as MIR21 and H/ACA box snoRNAs (small nucleolar RNAs) leading to leading to microRNAs degradation or snoRNA increased stability. This is Poly(A)-specific ribonuclease PARN (Parn) from Mus musculus (Mouse).